The chain runs to 169 residues: UPF0303 protein BruAb1_1406 (169 aa).

The protein belongs to the UPF0303 family.

This is UPF0303 protein BruAb1_1406 from Brucella abortus biovar 1 (strain 9-941).